The following is a 146-amino-acid chain: Small ribosomal subunit protein bS16 (146 aa).

The disordered stretch occupies residues 119 to 146; that stretch reads GSENKGGKSKKAEEKSAEKTAEKSEGEA. Residues 128–146 are compositionally biased toward basic and acidic residues; it reads KKAEEKSAEKTAEKSEGEA.

It belongs to the bacterial ribosomal protein bS16 family.

The protein is Small ribosomal subunit protein bS16 of Thermobifida fusca (strain YX).